The primary structure comprises 344 residues: N-acetyl-gamma-glutamyl-phosphate reductase 1 (344 aa).

C150 is a catalytic residue.

It belongs to the NAGSA dehydrogenase family. Type 1 subfamily.

The protein localises to the cytoplasm. It carries out the reaction N-acetyl-L-glutamate 5-semialdehyde + phosphate + NADP(+) = N-acetyl-L-glutamyl 5-phosphate + NADPH + H(+). Its pathway is amino-acid biosynthesis; L-arginine biosynthesis; N(2)-acetyl-L-ornithine from L-glutamate: step 3/4. Its function is as follows. Catalyzes the NADPH-dependent reduction of N-acetyl-5-glutamyl phosphate to yield N-acetyl-L-glutamate 5-semialdehyde. The sequence is that of N-acetyl-gamma-glutamyl-phosphate reductase 1 from Pseudomonas putida (strain ATCC 47054 / DSM 6125 / CFBP 8728 / NCIMB 11950 / KT2440).